The chain runs to 839 residues: Lon protease (839 aa).

Positions 31 to 224 (LFLIPIKSRP…KVLLFLKKEI (194 aa)) constitute a Lon N-terminal domain. Residue 377–384 (GPPGVGKT) coordinates ATP. The Lon proteolytic domain maps to 613–790 (ASVPGTALGL…EEVALLLFDE (178 aa)). Catalysis depends on residues Ser-696 and Lys-739. Residues 807-839 (IVNPTRKLSPKKKTTQKQKLSLSKQKGNNQKKK) form a disordered region. Residues 823–832 (KQKLSLSKQK) show a composition bias toward low complexity.

This sequence belongs to the peptidase S16 family. Homohexamer. Organized in a ring with a central cavity.

The protein resides in the cytoplasm. The enzyme catalyses Hydrolysis of proteins in presence of ATP.. ATP-dependent serine protease that mediates the selective degradation of mutant and abnormal proteins as well as certain short-lived regulatory proteins. Required for cellular homeostasis and for survival from DNA damage and developmental changes induced by stress. Degrades polypeptides processively to yield small peptide fragments that are 5 to 10 amino acids long. Binds to DNA in a double-stranded, site-specific manner. This Leptospira interrogans serogroup Icterohaemorrhagiae serovar copenhageni (strain Fiocruz L1-130) protein is Lon protease.